The primary structure comprises 356 residues: Ferrochelatase (356 aa).

Positions 214 and 295 each coordinate Fe cation.

Belongs to the ferrochelatase family.

Its subcellular location is the cytoplasm. It catalyses the reaction heme b + 2 H(+) = protoporphyrin IX + Fe(2+). Its pathway is porphyrin-containing compound metabolism; protoheme biosynthesis; protoheme from protoporphyrin-IX: step 1/1. In terms of biological role, catalyzes the ferrous insertion into protoporphyrin IX. This chain is Ferrochelatase, found in Paraburkholderia xenovorans (strain LB400).